Consider the following 192-residue polypeptide: Interleukin-18 (192 aa).

A propeptide spanning residues 1–35 is cleaved from the precursor; that stretch reads MAAIPVDDCINFVGMKFIDNTLYFVADSDENLETD.

Belongs to the IL-1 family. As to quaternary structure, forms a ternary complex with ligand-binding receptor subunit IL18R1 and signaling receptor subunit IL18RAP at the plasma membrane. Mature IL18 first binds to IL18R1 forming a low affinity binary complex, which then interacts with IL18RAP to form a high affinity ternary complex that signals inside the cell. Interacts with cargo receptor TMED10; the interaction mediates the translocation from the cytoplasm into the ERGIC (endoplasmic reticulum-Golgi intermediate compartment) and thereby secretion. Post-translationally, the pro-IL-18 precursor is processed by CASP1, CASP4 or CASP5 to yield its mature, active form. The pro-IL-18 precursor features autoinhibitory interactions between the propeptide and the post-cleavage-site region, preventing recognition by the IL18R1 receptor. Processing by CASP1, CASP4 or CASP5 induces conformational changes to generate critical receptor-binding sites. The mature form is then secreted and released in the extracellular milieu by passing through the gasdermin-D (GSDMD) pore. In contrast, cleavage by CASP3 inactivates IL18.

It localises to the cytoplasm. The protein localises to the cytosol. It is found in the secreted. Functionally, pro-inflammatory cytokine primarily involved in epithelial barrier repair, polarized T-helper 1 (Th1) cell and natural killer (NK) cell immune responses. Upon binding to IL18R1 and IL18RAP, forms a signaling ternary complex which activates NF-kappa-B, triggering synthesis of inflammatory mediators. Synergizes with IL12/interleukin-12 to induce IFNG synthesis from T-helper 1 (Th1) cells and natural killer (NK) cells. Involved in transduction of inflammation downstream of pyroptosis: its mature form is specifically released in the extracellular milieu by passing through the gasdermin-D (GSDMD) pore. This Felis catus (Cat) protein is Interleukin-18 (IL18).